Here is a 195-residue protein sequence, read N- to C-terminus: Imidazoleglycerol-phosphate dehydratase (195 aa).

It belongs to the imidazoleglycerol-phosphate dehydratase family.

It localises to the cytoplasm. It carries out the reaction D-erythro-1-(imidazol-4-yl)glycerol 3-phosphate = 3-(imidazol-4-yl)-2-oxopropyl phosphate + H2O. Its pathway is amino-acid biosynthesis; L-histidine biosynthesis; L-histidine from 5-phospho-alpha-D-ribose 1-diphosphate: step 6/9. In Shouchella clausii (strain KSM-K16) (Alkalihalobacillus clausii), this protein is Imidazoleglycerol-phosphate dehydratase.